The primary structure comprises 701 residues: Interleukin-1 receptor accessory protein-like 1-A (701 aa).

A signal peptide spans 1–19; that stretch reads MTALNPVLFLLCGVSVSLS. At 20–361 the chain is on the extracellular side; the sequence is LKVVSKRGSV…IGKRVELMYT (342 aa). In terms of domain architecture, Ig-like C2-type 1 spans 33 to 133; the sequence is TDWSVDYLKY…RNSTFCMKVS (101 aa). Cysteines 54 and 121 form a disulfide. N-linked (GlcNAc...) asparagine glycans are attached at residues asparagine 64, asparagine 125, asparagine 141, asparagine 216, asparagine 267, and asparagine 334. 2 consecutive Ig-like C2-type domains span residues 146–235 and 245–353; these read CYNS…TYLS and PRIL…VQIG. A disulfide bridge connects residues cysteine 167 and cysteine 219. Residues cysteine 270 and cysteine 337 are joined by a disulfide bond. A helical transmembrane segment spans residues 362 to 382; it reads VELAGGLGAILLLLALLLSVY. The Cytoplasmic segment spans residues 383-701; sequence KCYRIELLLC…RETSISSVIW (319 aa). In terms of domain architecture, TIR spans 407–563; sequence KEYDAYLSYS…RFWKQLRYTM (157 aa). Glutamate 495 is a catalytic residue. A required for synaptic vesicle accumulation during synaptogenesis region spans residues 568–701; the sequence is PQQTITNHAL…RETSISSVIW (134 aa).

It belongs to the interleukin-1 receptor family.

Its subcellular location is the cell membrane. The protein resides in the cytoplasm. It carries out the reaction NAD(+) + H2O = ADP-D-ribose + nicotinamide + H(+). May regulate secretion and presynaptic differentiation through inhibition of the activity of N-type voltage-gated calcium channel. During presynaptic differentiation may regulate both synaptic vesicle accumulation in axon terminals and subsequent axon terminal remodeling. This is Interleukin-1 receptor accessory protein-like 1-A (il1rapl1a) from Danio rerio (Zebrafish).